Here is a 293-residue protein sequence, read N- to C-terminus: Protein boule-like (293 aa).

Positions 1 to 16 (METESRAQSTNQTQTD) are enriched in polar residues. The tract at residues 1 to 39 (METESRAQSTNQTQTDSLSPSPNPVSPVPLNNPTSGPRY) is disordered. 3 positions are modified to phosphoserine: Ser19, Ser21, and Ser26. The RRM domain occupies 45–122 (NRIFVGGIDF…KKLNIGPAIR (78 aa)). In terms of domain architecture, DAZ spans 172 to 196 (PSRSISSSPVMVAQPVYQQPAYHYQ).

This sequence belongs to the RRM DAZ family. Interacts with DAZ1 and DAZL. As to expression, testis specific. Not expressed in early embryos, primoridal germ cells and spermatogonial cells. First expressed in the cytoplasm of spermatocytes and then persists through meiosis.

It localises to the cytoplasm. Probable RNA-binding protein, which may be required during spermatogenesis. May act by binding to the 3'-UTR of mRNAs and regulating their translation. This chain is Protein boule-like, found in Mus musculus (Mouse).